The chain runs to 399 residues: L-2-hydroxyglutarate dehydrogenase (399 aa).

Belongs to the L2HGDH family. FAD serves as cofactor.

It catalyses the reaction (S)-2-hydroxyglutarate + A = 2-oxoglutarate + AH2. Catalyzes the dehydrogenation of L-2-hydroxyglutarate (L2HG or(S)-2-hydroxyglutarate) to 2-oxoglutarate (alpha-ketoglutarate). Active in vitro with the artificial electron acceptor 2,6-dichlorophenolindophenol (DCPIP). Also displays a very low oxidase activity in vitro on L-2-hydroxyglutarate with O2 as the electron acceptor, but this activity is most likely not physiological. The polypeptide is L-2-hydroxyglutarate dehydrogenase (Indibacter alkaliphilus (strain CCUG 57479 / KCTC 22604 / LW1)).